The following is a 100-amino-acid chain: Urease subunit gamma (100 aa).

Belongs to the urease gamma subunit family. Heterotrimer of UreA (gamma), UreB (beta) and UreC (alpha) subunits. Three heterotrimers associate to form the active enzyme.

The protein resides in the cytoplasm. The enzyme catalyses urea + 2 H2O + H(+) = hydrogencarbonate + 2 NH4(+). Its pathway is nitrogen metabolism; urea degradation; CO(2) and NH(3) from urea (urease route): step 1/1. The protein is Urease subunit gamma of Yersinia rohdei.